The sequence spans 426 residues: Amino acid transporter AVT1H (426 aa).

The next 11 membrane-spanning stretches (helical) occupy residues 34–54, 55–75, 110–130, 148–168, 182–202, 215–235, 248–268, 292–312, 340–360, 363–383, and 392–412; these read SFLHSVINMVGMLIGLGQLSM, PYAVESGGWMSIFLLISFGIL, LIVCLFIYLEIFMALVSYTIS, HFPAAKLTAVAVAIALPSLWI, ILMSAIIFGSVVYTAIFGGVI, IPTVSGIYLFSFGGHIVFPNL, VSIVSFATVTALYGALAITGA, IALWATVLTPMTKYALEFAPL, LLLVILALALTVPYFGYVLSL, SLVSVTIAVTLPSAFYLKICW, and AANLGFVVLGCVLGVLGSFES.

It belongs to the amino acid/polyamine transporter 2 family. Amino acid/auxin permease (AAAP) (TC 2.A.18.5) subfamily.

The protein localises to the membrane. This Arabidopsis thaliana (Mouse-ear cress) protein is Amino acid transporter AVT1H.